Consider the following 331-residue polypeptide: Meiotic recombination protein W68 (331 aa).

One can recognise a Topo IIA-type catalytic domain in the interval 1 to 120 (MDEFSENIER…LGILAASKGL (120 aa)). The active-site O-(5'-phospho-DNA)-tyrosine intermediate is tyrosine 81. Mg(2+) contacts are provided by glutamate 167 and aspartate 221.

It belongs to the TOP6A family. Mg(2+) serves as cofactor.

The protein resides in the nucleus. It catalyses the reaction ATP-dependent breakage, passage and rejoining of double-stranded DNA.. Functionally, required for meiotic recombination. Together with mei-P22, mediates DNA cleavage that forms the double-strand breaks (DSB) that initiate meiotic recombination. This chain is Meiotic recombination protein W68, found in Drosophila melanogaster (Fruit fly).